The primary structure comprises 158 residues: Transcription elongation factor GreA (158 aa).

Residues 4-75 (EKTYPMTQEG…TQLENMIRNA (72 aa)) are a coiled coil.

This sequence belongs to the GreA/GreB family.

Its function is as follows. Necessary for efficient RNA polymerase transcription elongation past template-encoded arresting sites. The arresting sites in DNA have the property of trapping a certain fraction of elongating RNA polymerases that pass through, resulting in locked ternary complexes. Cleavage of the nascent transcript by cleavage factors such as GreA or GreB allows the resumption of elongation from the new 3'terminus. GreA releases sequences of 2 to 3 nucleotides. The polypeptide is Transcription elongation factor GreA (Bacillus cereus (strain ATCC 10987 / NRS 248)).